Consider the following 391-residue polypeptide: DNA-directed RNA polymerase subunit Rpo1C (391 aa).

It belongs to the RNA polymerase beta' chain family. In terms of assembly, part of the RNA polymerase complex.

It is found in the cytoplasm. It carries out the reaction RNA(n) + a ribonucleoside 5'-triphosphate = RNA(n+1) + diphosphate. Functionally, DNA-dependent RNA polymerase (RNAP) catalyzes the transcription of DNA into RNA using the four ribonucleoside triphosphates as substrates. Forms part of the jaw domain. This is DNA-directed RNA polymerase subunit Rpo1C from Thermococcus gammatolerans (strain DSM 15229 / JCM 11827 / EJ3).